The following is a 662-amino-acid chain: Junctophilin-1 (662 aa).

At 1–640 the chain is on the cytoplasmic side; that stretch reads MTGGRFDFDD…EREANSGPNS (640 aa). 5 MORN repeats span residues 14–36, 38–59, 60–82, 106–128, and 129–151; these read YCGG…KGQG, YSGS…SGNT, YQGY…KWMY, YEGT…DGGT, and YQGQ…PYGM. Residues Ser-157, Ser-216, and Ser-220 each carry the phosphoserine modification. Residues 228-247 form a disordered region; the sequence is SKSSISSKRSSVRSDAAMSR. MORN repeat units follow at residues 281–303 and 304–326; these read YMGE…NGMK and YEGE…DGSK. Residues 432 to 443 show a composition bias toward basic and acidic residues; sequence VDAKENPEEKVP. Residues 432 to 634 form a disordered region; sequence VDAKENPEEK…DSCPSMEREA (203 aa). Thr-448 carries the post-translational modification Phosphothreonine. Ser-452 carries the post-translational modification Phosphoserine. Thr-461 carries the phosphothreonine modification. Ser-465, Ser-469, and Ser-475 each carry phosphoserine. Residues 584–599 show a composition bias toward low complexity; sequence KPSPNKWSPPKSVTKP. Over residues 600–614 the composition is skewed to basic and acidic residues; the sequence is VAKESKAEPKAKKSE. Residues 641 to 661 traverse the membrane as a helical; Anchor for type IV membrane protein segment; that stretch reads VMIVLVMLLNIGLAILFVHFL.

It belongs to the junctophilin family.

It is found in the cell membrane. The protein resides in the endoplasmic reticulum membrane. Its subcellular location is the sarcoplasmic reticulum membrane. Functionally, junctophilins contribute to the formation of junctional membrane complexes (JMCs) which link the plasma membrane with the endoplasmic or sarcoplasmic reticulum in excitable cells. Provides a structural foundation for functional cross-talk between the cell surface and intracellular calcium release channels. JPH1 contributes to the construction of the skeletal muscle triad by linking the t-tubule (transverse-tubule) and SR (sarcoplasmic reticulum) membranes. The protein is Junctophilin-1 (JPH1) of Oryctolagus cuniculus (Rabbit).